The sequence spans 124 residues: Large ribosomal subunit protein uL29 (124 aa).

Belongs to the universal ribosomal protein uL29 family.

The polypeptide is Large ribosomal subunit protein uL29 (RPL35) (Tetrahymena thermophila (strain SB210)).